A 191-amino-acid chain; its full sequence is MREIGILGGTFDPPHLGHLLIAEEVRRAKELDEIWFIPTNTPPHKEDTTTSADHRTSMIQLAIDSHPSFKLNDMELKREGKSYTYDTIQELTDLYPSHTFYFIIGGDMVEFLPKWHRIDELLEMITFIGVSRPGYSLQTSYPVDFVDIPTIQLSSTILRERLQNREWIRYLLPDSVMQYVREHQLYGFGRN.

This sequence belongs to the NadD family.

The enzyme catalyses nicotinate beta-D-ribonucleotide + ATP + H(+) = deamido-NAD(+) + diphosphate. Its pathway is cofactor biosynthesis; NAD(+) biosynthesis; deamido-NAD(+) from nicotinate D-ribonucleotide: step 1/1. In terms of biological role, catalyzes the reversible adenylation of nicotinate mononucleotide (NaMN) to nicotinic acid adenine dinucleotide (NaAD). The chain is Probable nicotinate-nucleotide adenylyltransferase from Oceanobacillus iheyensis (strain DSM 14371 / CIP 107618 / JCM 11309 / KCTC 3954 / HTE831).